The sequence spans 267 residues: MQQREEKQLEAFLESLVARVAHLKGSLQSFIYKLENEYDRLTWPSVLDNFALISGQLNTINKLLRNEKTPSYKSQVIIPLLLSPDRDEELAKLTEHRVPVFSHEIVPDHLRTKPDPEVEEQEKHLSAEAARIGPEVAQKQIQALNKLCSNLLEKLNNPREDRDSETSALRQNKPSFNPADTNALVAAVGFGKGLSKCRPPGPVAPGHPGQPMMQTGPTLQQVTIAGASGHQAGMSGPVAPQQPGQPGKIPSNIKTNIKSASMHPYNR.

Coiled coils occupy residues 2-27 (QQRE…KGSL) and 118-163 (VEEQ…EDRD). Basic and acidic residues predominate over residues 156-165 (NNPREDRDSE). Disordered stretches follow at residues 156–180 (NNPR…NPAD) and 227–267 (ASGH…PYNR). The span at 166–180 (TSALRQNKPSFNPAD) shows a compositional bias: polar residues. Low complexity predominate over residues 236–247 (GPVAPQQPGQPG).

It belongs to the Mediator complex subunit 8 family. As to quaternary structure, component of the Mediator complex. May be part of a multisubunit E3 ubiquitin-protein ligase complex.

The protein localises to the nucleus. It functions in the pathway protein modification; protein ubiquitination. In terms of biological role, component of the Mediator complex, a coactivator involved in the regulated transcription of nearly all RNA polymerase II-dependent genes. Mediator functions as a bridge to convey information from gene-specific regulatory proteins to the basal RNA polymerase II transcription machinery. Mediator is recruited to promoters by direct interactions with regulatory proteins and serves as a scaffold for the assembly of a functional preinitiation complex with RNA polymerase II and the general transcription factors. May play a role as a target recruitment subunit in E3 ubiquitin-protein ligase complexes and thus in ubiquitination and subsequent proteasomal degradation of target proteins. The polypeptide is Mediator of RNA polymerase II transcription subunit 8 (med8) (Danio rerio (Zebrafish)).